The following is a 353-amino-acid chain: (S)-8-amino-7-oxononanoate synthase BioU (353 aa).

10 to 14 (GTGGI) lines the NAD(+) pocket. Lys147 acts as the Nucleophile in catalysis. Lys147 is subject to Allysine. 214–215 (GT) serves as a coordination point for NAD(+). Catalysis depends on Glu218, which acts as the Proton acceptor. The Proton donor and proton acceptor role is filled by His222.

This sequence belongs to the BioU family. Monomer.

It catalyses the reaction (8S)-8-amino-7-oxononanoate + L-lysyl-[protein] + CO2 = (S)-2-amino-6-oxohexanoyl-[protein] + (7R,8S)-8-amino-7-(carboxyamino)nonanoate + 2 H(+). The enzyme catalyses (8S)-8-amino-7-oxononanoate + L-lysyl-[protein] + NADPH + H(+) = N(6)-[(2S,3R)-2-amino-8-carboxyoctan-3-yl]-L-lysyl-[protein] + NADP(+) + H2O. It carries out the reaction N(6)-[(2S,3R)-2-amino-8-carboxyoctan-3-yl]-L-lysyl-[protein] + CO2 + NADP(+) + H2O = (S)-2-amino-6-oxohexanoyl-[protein] + (7R,8S)-8-amino-7-(carboxyamino)nonanoate + NADPH + 3 H(+). The catalysed reaction is (8S)-8-amino-7-oxononanoate + L-lysyl-[protein] + NADH + H(+) = N(6)-[(2S,3R)-2-amino-8-carboxyoctan-3-yl]-L-lysyl-[protein] + NAD(+) + H2O. It catalyses the reaction N(6)-[(2S,3R)-2-amino-8-carboxyoctan-3-yl]-L-lysyl-[protein] + CO2 + NAD(+) + H2O = (S)-2-amino-6-oxohexanoyl-[protein] + (7R,8S)-8-amino-7-(carboxyamino)nonanoate + NADH + 3 H(+). The protein operates within cofactor biosynthesis; biotin biosynthesis. Functionally, a 'suicide' enzyme that participates in biotin synthesis. Catalyzes the formation of (S)-8-amino-7-oxononanoate (DAN-carbamic acid) from (7R,8S)-8-amino-7-(carboxyamino)nonanoate (DAN), a function equivalent to the cannonical BioA reaction and the first half-reaction of BioD. The cellular requirement for biotin is thought be low enough that this single turnover enzyme supplies a sufficient amount of the cofactor. Overall it catalyzes three reactions: formation of a covalent linkage with 8-amino-7-oxononanoate to yield a BioU-DAN conjugate at the epsilon-amino group of Lys124 of BioU using NAD(P)H, carboxylation of the conjugate to form BioU-DAN-carbamic acid, and release of DAN-carbamic acid using NAD(P)+. Complements a bioA deletion in E.coli. The chain is (S)-8-amino-7-oxononanoate synthase BioU from Haloferax mediterranei (strain ATCC 33500 / DSM 1411 / JCM 8866 / NBRC 14739 / NCIMB 2177 / R-4) (Halobacterium mediterranei).